A 1303-amino-acid polypeptide reads, in one-letter code: Endoplasmic reticulum transmembrane helix translocase spfA (1303 aa).

Helical transmembrane passes span 25 to 45 and 57 to 77; these read LHAY…VYLS and EWTF…WLMT. An A-domain; part 1 region spans residues 158–191; that stretch reads KPPVKVFQQAQGLTSKEEIDRIQHHYGDNTFDIP. 2 consecutive transmembrane segments (helical) span residues 201–221 and 223–243; these read EHAV…WMLD and YWYY…TVVW. Positions 256-408 are A-domain; part 2; that stretch reads NIKPYDVWVY…LVRTMIYSTE (153 aa). N-linked (GlcNAc...) asparagine glycosylation occurs at asparagine 287. Residues 415–435 form a helical membrane-spanning segment; that stretch reads VEALLFILFLLIFAIAAAWYV. An N-linked (GlcNAc...) asparagine glycan is attached at asparagine 474. The segment at 484 to 513 is P-domain; part 1; the sequence is AIFCTEPFRIPFAGRVDVACFDKTGTLTGE. Residue aspartate 505 is the 4-aspartylphosphate intermediate of the active site. Residues aspartate 505 and threonine 507 each coordinate Mg(2+). 505 to 507 contacts ATP; the sequence is DKT. The N-domain stretch occupies residues 515–721; it reads LVVDGIAGLT…FAGFLVLQCP (207 aa). N-linked (GlcNAc...) asparagine glycosylation occurs at asparagine 589. Residues phenylalanine 616 and arginine 678 each coordinate ATP. A P-domain; part 2 region spans residues 724–883; sequence EDAIKAVRML…HVGVALLNGS (160 aa). N-linked (GlcNAc...) asparagine glycosylation occurs at asparagine 734. ATP contacts are provided by residues aspartate 746 and 862 to 866; that span reads DGTND. A Mg(2+)-binding site is contributed by aspartate 862. The interval 884 to 1019 is arm-like; it reads PEDLAKIAEH…ELDDSEPPTI (136 aa). Asparagine 958 carries N-linked (GlcNAc...) asparagine glycosylation. Positions 1020–1035 are P-domain; part 3; sequence KLGDASVAAPFTSKLA. 5 helical membrane-spanning segments follow: residues 1060–1080, 1082–1102, 1122–1142, 1201–1221, and 1239–1259; these read ILAL…LDGI, FGDG…LSIS, VYII…LIYL, AMYW…TEFI, and VTLT…ENVL. A disordered region spans residues 1277–1303; sequence DQLQREMERKKQEELETQAEKERQRKV.

The protein belongs to the cation transport ATPase (P-type) (TC 3.A.3) family. Type V subfamily. Requires Mg(2+) as cofactor.

Its subcellular location is the endoplasmic reticulum membrane. The enzyme catalyses [protein]-with a C-terminal TM segment(out) + ATP + H2O = [protein]-with a C-terminal TM segment(in) + ADP + phosphate + H(+). Its activity is regulated as follows. The ATPase activity is stimulated by phosphatidylinositol 4-phosphate (PI4P). In terms of biological role, endoplasmic reticulum (ER) translocase required to remove mitochondrial transmembrane proteins mistargeted to the endoplasmic reticulum. Acts as a dislocase that mediates the ATP-dependent extraction of mislocalized mitochondrial transmembrane proteins from the endoplasmic reticulum membrane. Works in concert with the ER Ca(2+) pump srcA to support ER homeostasis. With srcA, also supports redox homeostasis and virulence. This is Endoplasmic reticulum transmembrane helix translocase spfA from Aspergillus fumigatus (strain ATCC MYA-4609 / CBS 101355 / FGSC A1100 / Af293) (Neosartorya fumigata).